Consider the following 166-residue polypeptide: MAKEQQQATDLNEKLIAVNRVSKTVKGGRIFSFTALTVVGDGNGRVGFGYGKAREVPAAIQKSMEKARRNMFTIALNEGTLHHAVKGRHTGSKVYMQPAAEGTGIIAGGAMRAVLEVVGVRNVLAKAYGSTNPINVVRATIAGLSSVKSPEMVAAKRGLTVESISE.

Residues 11-74 (LNEKLIAVNR…EKARRNMFTI (64 aa)) form the S5 DRBM domain.

This sequence belongs to the universal ribosomal protein uS5 family. In terms of assembly, part of the 30S ribosomal subunit. Contacts proteins S4 and S8.

Functionally, with S4 and S12 plays an important role in translational accuracy. Its function is as follows. Located at the back of the 30S subunit body where it stabilizes the conformation of the head with respect to the body. The polypeptide is Small ribosomal subunit protein uS5 (Aliivibrio fischeri (strain ATCC 700601 / ES114) (Vibrio fischeri)).